The primary structure comprises 165 residues: Small ribosomal subunit protein uS5 (165 aa).

One can recognise an S5 DRBM domain in the interval Leu-10 to Val-73.

The protein belongs to the universal ribosomal protein uS5 family. In terms of assembly, part of the 30S ribosomal subunit. Contacts proteins S4 and S8.

In terms of biological role, with S4 and S12 plays an important role in translational accuracy. Located at the back of the 30S subunit body where it stabilizes the conformation of the head with respect to the body. This Clostridium acetobutylicum (strain ATCC 824 / DSM 792 / JCM 1419 / IAM 19013 / LMG 5710 / NBRC 13948 / NRRL B-527 / VKM B-1787 / 2291 / W) protein is Small ribosomal subunit protein uS5.